The following is a 1420-amino-acid chain: DNA-directed RNA polymerase subunit beta'' (1420 aa).

Zn(2+) contacts are provided by Cys220, Cys295, Cys302, and Cys305.

Belongs to the RNA polymerase beta' chain family. RpoC2 subfamily. As to quaternary structure, in plastids the minimal PEP RNA polymerase catalytic core is composed of four subunits: alpha, beta, beta', and beta''. When a (nuclear-encoded) sigma factor is associated with the core the holoenzyme is formed, which can initiate transcription. Zn(2+) serves as cofactor.

Its subcellular location is the plastid. It localises to the chloroplast. The catalysed reaction is RNA(n) + a ribonucleoside 5'-triphosphate = RNA(n+1) + diphosphate. DNA-dependent RNA polymerase catalyzes the transcription of DNA into RNA using the four ribonucleoside triphosphates as substrates. In Adiantum capillus-veneris (Maidenhair fern), this protein is DNA-directed RNA polymerase subunit beta''.